The sequence spans 483 residues: Altronate oxidoreductase (483 aa).

18–29 (IIQFGEGNFLRA) serves as a coordination point for NAD(+).

Belongs to the mannitol dehydrogenase family. UxaB subfamily.

It catalyses the reaction D-altronate + NAD(+) = keto-D-tagaturonate + NADH + H(+). Its pathway is carbohydrate metabolism; pentose and glucuronate interconversion. The sequence is that of Altronate oxidoreductase from Enterobacter sp. (strain 638).